We begin with the raw amino-acid sequence, 62 residues long: Conotoxin Pl168 (62 aa).

The signal sequence occupies residues 1–21 (MGMRMMFTVFLLVVLATTVVS). Residues 22–40 (FTLDRASDGANAAADLVAR) constitute a propeptide that is removed on maturation. 2 cysteine pairs are disulfide-bonded: Cys-46–Cys-52 and Cys-47–Cys-61.

It belongs to the conotoxin A superfamily. Both Pro-53 and Pro-62 are not in cis/trans isomerization. In terms of tissue distribution, expressed by the venom duct.

Its subcellular location is the secreted. Functionally, probable neurotoxin with unknown target. Possibly targets ion channels. The chain is Conotoxin Pl168 from Conus planorbis (Planorbis cone).